Reading from the N-terminus, the 313-residue chain is Protein FixB (313 aa).

Residue Leu-255–Asp-283 participates in FAD binding.

Belongs to the ETF alpha-subunit/FixB family. As to quaternary structure, heterodimer of FixA and FixB.

It functions in the pathway amine and polyamine metabolism; carnitine metabolism. Its function is as follows. Required for anaerobic carnitine reduction. May bring reductant to CaiA. The chain is Protein FixB from Escherichia coli (strain K12 / MC4100 / BW2952).